Consider the following 213-residue polypeptide: Thymidylate kinase (213 aa).

Glycine 10–threonine 17 lines the ATP pocket.

Belongs to the thymidylate kinase family.

It carries out the reaction dTMP + ATP = dTDP + ADP. Functionally, phosphorylation of dTMP to form dTDP in both de novo and salvage pathways of dTTP synthesis. The polypeptide is Thymidylate kinase (Klebsiella pneumoniae (strain 342)).